The following is a 247-amino-acid chain: UPF0280 protein MMP1236 (247 aa).

It belongs to the UPF0280 family.

The sequence is that of UPF0280 protein MMP1236 from Methanococcus maripaludis (strain DSM 14266 / JCM 13030 / NBRC 101832 / S2 / LL).